Reading from the N-terminus, the 1382-residue chain is Hepatocyte growth factor receptor (1382 aa).

Positions 1-24 (MKAPTALAPGILLLLLTLAQRSHG) are cleaved as a signal peptide. Residues 25–935 (ECKEALVKSE…IVQPDQNFAG (911 aa)) are Extracellular-facing. Residues 27-516 (KEALVKSEMN…TGKKITKIPL (490 aa)) enclose the Sema domain. The N-linked (GlcNAc...) asparagine glycan is linked to N45. Disulfide bonds link C95/C101, C98/C160, C133/C141, and C173/C176. Residue N106 is glycosylated (N-linked (GlcNAc...) asparagine). N-linked (GlcNAc...) asparagine glycosylation is found at N203 and N359. 2 disulfides stabilise this stretch: C299-C364 and C386-C398. N400 and N406 each carry an N-linked (GlcNAc...) asparagine glycan. 4 disulfide bridges follow: C521–C539, C527–C562, C530–C546, and C542–C552. 3 consecutive IPT/TIG domains span residues 564–656 (PAVY…FSYV), 658–740 (PVIT…FSYR), and 743–837 (PVVS…LTYV). Residue T583 is glycosylated (O-linked (Man) threonine). 2 N-linked (GlcNAc...) asparagine glycosylation sites follow: N608 and N636. Residues T677 and T762 are each glycosylated (O-linked (Man) threonine). N786 and N880 each carry an N-linked (GlcNAc...) asparagine glycan. Residues 936–956 (LIIGAVSISVVVLLVSGLFLW) form a helical membrane-spanning segment. At 957-1379 (LRKRKHKDLG…LPSQDNIDGE (423 aa)) the chain is on the cytoplasmic side. At S967 the chain carries Phosphoserine. T978 is modified (phosphothreonine). A phosphoserine mark is found at S991, S998, and S1001. Y1004 is subject to Phosphotyrosine. Residues 1079–1346 (VHFNEVIGRG…RISSIFSTFI (268 aa)) form the Protein kinase domain. Residues 1085–1093 (IGRGHFGCV) and K1111 contribute to the ATP site. D1205 acts as the Proton acceptor in catalysis. The interval 1213-1382 (LDEKFTVKVA…QDNIDGEANT (170 aa)) is interaction with RANBP9. Phosphotyrosine is present on Y1231. Phosphotyrosine; by autocatalysis is present on residues Y1235 and Y1236. Residue T1290 is modified to Phosphothreonine. The segment at 1321–1360 (WHPKAEMRPSVSELVSRISSIFSTFIGEHYVHVNATYVNV) is interaction with MUC20. Phosphotyrosine; by autocatalysis is present on residues Y1350 and Y1357. Residue Y1366 is modified to Phosphotyrosine.

The protein belongs to the protein kinase superfamily. Tyr protein kinase family. Heterodimer made of an alpha chain (50 kDa) and a beta chain (145 kDa) which are disulfide linked. Binds PLXNB1. Interacts when phosphorylated with downstream effectors including STAT3, PIK3R1, SRC, PCLG1, GRB2 and GAB1. Interacts with SPSB1, SPSB2 and SPSB4. Interacts with INPP5D/SHIP1. When phosphorylated at Tyr-1357, interacts with INPPL1/SHIP2. Interacts with RANBP9 and RANBP10, as well as SPSB1, SPSB2, SPSB3 and SPSB4. SPSB1 binding occurs in the presence and in the absence of HGF, however HGF treatment has a positive effect on this interaction. Interacts with MUC20; prevents interaction with GRB2 and suppresses hepatocyte growth factor-induced cell proliferation. Interacts with GRB10. Interacts with PTPN1 and PTPN2. Interacts with HSP90AA1 and HSP90AB1; the interaction suppresses MET kinase activity. Interacts with tensin TNS3. Interacts (when phosphorylated) with tensin TNS4 (via SH2 domain); the interaction increases MET protein stability by inhibiting MET endocytosis and subsequent lysosomal degradation. Autophosphorylated in response to ligand binding on Tyr-1235 and Tyr-1236 in the kinase domain leading to further phosphorylation of Tyr-1350 and Tyr-1357 in the C-terminal multifunctional docking site. Dephosphorylated by PTPRJ at Tyr-1350 and Tyr-1366. Dephosphorylated by PTPN1 and PTPN2. In terms of processing, ubiquitinated. Ubiquitination by CBL regulates the receptor stability and activity through proteasomal degradation. Post-translationally, O-mannosylation of IPT/TIG domains by TMEM260 is required for protein maturation. O-mannosylated residues are composed of single mannose glycans that are not elongated or modified. In terms of tissue distribution, expressed at highest levels in lung, liver and kidney, also expressed in stomach, intestine, spleen, testis and brain. Not expressed in heart or muscle.

It localises to the membrane. It carries out the reaction L-tyrosyl-[protein] + ATP = O-phospho-L-tyrosyl-[protein] + ADP + H(+). With respect to regulation, in its inactive state, the C-terminal tail interacts with the catalytic domain and inhibits the kinase activity. Upon ligand binding, the C-terminal tail is displaced and becomes phosphorylated, thus increasing the kinase activity. In terms of biological role, receptor tyrosine kinase that transduces signals from the extracellular matrix into the cytoplasm by binding to hepatocyte growth factor/HGF ligand. Regulates many physiological processes including proliferation, scattering, morphogenesis and survival. Ligand binding at the cell surface induces autophosphorylation of MET on its intracellular domain that provides docking sites for downstream signaling molecules. Following activation by ligand, interacts with the PI3-kinase subunit PIK3R1, PLCG1, SRC, GRB2, STAT3 or the adapter GAB1. Recruitment of these downstream effectors by MET leads to the activation of several signaling cascades including the RAS-ERK, PI3 kinase-AKT, or PLCgamma-PKC. The RAS-ERK activation is associated with the morphogenetic effects while PI3K/AKT coordinates prosurvival effects. During embryonic development, MET signaling plays a role in gastrulation, development and migration of muscles and neuronal precursors, angiogenesis and kidney formation. In adults, participates in wound healing as well as organ regeneration and tissue remodeling. Also promotes differentiation and proliferation of hematopoietic cells. The protein is Hepatocyte growth factor receptor (Met) of Rattus norvegicus (Rat).